Here is an 840-residue protein sequence, read N- to C-terminus: Intracellular phospholipase A1 (840 aa).

Disordered regions lie at residues 1–142 (MSGS…RRRK) and 666–718 (KKNK…AANA). Over residues 26 to 39 (GKVKQKEKPKEKQM) the composition is skewed to basic and acidic residues. Residues 97–111 (SRPSGLPSNGNPGSS) show a composition bias toward low complexity. A DDHD domain is found at 564 to 827 (LEFKVKYLFA…ALFLANVLYC (264 aa)). Residues 668–680 (NKDDKTADARSGG) are compositionally biased toward basic and acidic residues. Acidic residues predominate over residues 681 to 694 (DDENEDEDECDSDE).

The protein belongs to the PA-PLA1 family.

The enzyme catalyses 1,2-dihexadecanoyl-sn-glycero-3-phospho-(1D-myo-inositol) + H2O = 2-hexadecanoyl-sn-glycero-3-phospho-(1D-myo-inositol) + hexadecanoate + H(+). It catalyses the reaction a 1,2-diacyl-sn-glycero-3-phospho-L-serine + H2O = a 2-acyl-sn-glycero-3-phospho-L-serine + a fatty acid + H(+). The catalysed reaction is 1-hexadecanoyl-2-(9Z-octadecenoyl)-sn-glycero-3-phospho-L-serine + H2O = 2-(9Z-octadecenoyl)-sn-glycero-3-phospho-L-serine + hexadecanoate + H(+). It carries out the reaction 1,2-di-(9Z-octadecenoyl)-sn-glycero-3-phosphocholine + H2O = (9Z-octadecenoyl)-sn-glycero-3-phosphocholine + (9Z)-octadecenoate + H(+). The enzyme catalyses a 1,2-diacyl-sn-glycero-3-phosphocholine + H2O = a 1-acyl-sn-glycero-3-phosphocholine + a fatty acid + H(+). It catalyses the reaction 1,2-dihexadecanoyl-sn-glycero-3-phosphocholine + H2O = 1-hexadecanoyl-sn-glycero-3-phosphocholine + hexadecanoate + H(+). With respect to regulation, inhibited by E-6-bromomethylene-3-1-naphthalenyl-2H-tetrahydropyran-2-one (BEL) in vitro. Its function is as follows. Hydrolyzes the ester bond at the sn-1 position of glycerophospholipids and produces 2-acyl lysophospholipids, being phosphatidylinositol (PI) its major substrate. PI is a versatile lipid that not only serves as a structural component of cellular membranes, but also plays important roles in signal transduction through distinct phosphorylated derivatives of the inositol head group. Catalyzes the hydrolysis of phosphatidylcholine at sn-2 position in vitro. Regulates asymmetric division, an important property of stem cells in C.elegans, by controlling the subcellular localizations of beta-catenin. The sequence is that of Intracellular phospholipase A1 from Caenorhabditis elegans.